A 928-amino-acid polypeptide reads, in one-letter code: DNA polymerase I (928 aa).

The 5'-3' exonuclease domain maps to 1-323; that stretch reads MVQIPENPLI…IDESPSEPAA (323 aa). A 3'-5' exonuclease domain is found at 324-517; it reads ALSYENYVTI…LHLKMWPELQ (194 aa). The klenow fragment stretch occupies residues 324 to 928; it reads ALSYENYVTI…GSGENWDQAH (605 aa). The polymerase stretch occupies residues 521–928; it reads GPLNVFENIE…GSGENWDQAH (408 aa).

It belongs to the DNA polymerase type-A family. In terms of assembly, single-chain monomer with multiple functions.

The enzyme catalyses DNA(n) + a 2'-deoxyribonucleoside 5'-triphosphate = DNA(n+1) + diphosphate. Functionally, in addition to polymerase activity, this DNA polymerase exhibits 3'-5' and 5'-3' exonuclease activity. It is able to utilize nicked circular duplex DNA as a template and can unwind the parental DNA strand from its template. This Salmonella typhimurium (strain LT2 / SGSC1412 / ATCC 700720) protein is DNA polymerase I (polA).